The chain runs to 550 residues: Spermatogenesis-associated protein 2 (550 aa).

The PUB domain maps to 83-156 (TVGTAFATLE…YNVRDHPGGA (74 aa)). Positions 320-337 (YHLSSLDEVDLYTERGLG) match the PIM motif motif. Residues 457 to 480 (SKPVGSGPSPVGSLVSSGSSSSGG) form a disordered region.

Belongs to the SPATA2 family.

The protein localises to the cytoplasm. It is found in the nucleus. Bridging factor that mediates the recruitment of cyld to the LUBAC complex, thereby regulating TNF-alpha-induced necroptosis. Required to activate the 'Met-1'- (linear) and 'Lys-63'-linked deubiquitinase activities of cyld. The sequence is that of Spermatogenesis-associated protein 2 from Danio rerio (Zebrafish).